We begin with the raw amino-acid sequence, 1342 residues long: DNA-directed RNA polymerase subunit beta (1342 aa).

The protein belongs to the RNA polymerase beta chain family. As to quaternary structure, the RNAP catalytic core consists of 2 alpha, 1 beta, 1 beta' and 1 omega subunit. When a sigma factor is associated with the core the holoenzyme is formed, which can initiate transcription.

The catalysed reaction is RNA(n) + a ribonucleoside 5'-triphosphate = RNA(n+1) + diphosphate. In terms of biological role, DNA-dependent RNA polymerase catalyzes the transcription of DNA into RNA using the four ribonucleoside triphosphates as substrates. The protein is DNA-directed RNA polymerase subunit beta of Enterobacter sp. (strain 638).